A 691-amino-acid chain; its full sequence is Methionine--tRNA ligase (691 aa).

The 'HIGH' region motif lies at 12 to 22 (PYANGSFHIGH). Residues Cys-143, Cys-146, Cys-156, and Cys-159 each coordinate Zn(2+). The 'KMSKS' region motif lies at 341–345 (KMSKS). An ATP-binding site is contributed by Lys-344. A tRNA-binding domain is found at 585-691 (DFVKVDLRIA…PGAQPGMRIH (107 aa)).

This sequence belongs to the class-I aminoacyl-tRNA synthetase family. MetG type 1 subfamily. Homodimer. The cofactor is Zn(2+).

The protein localises to the cytoplasm. It catalyses the reaction tRNA(Met) + L-methionine + ATP = L-methionyl-tRNA(Met) + AMP + diphosphate. Functionally, is required not only for elongation of protein synthesis but also for the initiation of all mRNA translation through initiator tRNA(fMet) aminoacylation. This chain is Methionine--tRNA ligase, found in Bordetella avium (strain 197N).